An 862-amino-acid polypeptide reads, in one-letter code: uncharacterized protein (862 aa).

A signal peptide spans 1–25; it reads MKPRPYSVFLFLHIVFYSLLSAVNG. Residues 26-61 are Lumenal-facing; that stretch reads SPSLDYFETCSNFVPRAGIPTFSPYAVIKNFDEVNR. Residues 62 to 82 traverse the membrane as a helical segment; it reads MYYIQVVGNLSGVITIVGGNG. Topologically, residues 83-187 are cytoplasmic; it reads SHIHAASVYS…STTLYYFYPV (105 aa). Residues 188-208 form a helical membrane-spanning segment; sequence ISYLVVVSLAYVSFSIIYALF. Topologically, residues 209-230 are lumenal; sequence LNPWTGSLDPFKSIFNFNMDPD. Residues 231 to 250 form a helical membrane-spanning segment; the sequence is ALRLTSLGFFDFVQYLQFAV. Residues 251 to 256 are Cytoplasmic-facing; sequence STAQVS. Residues 257 to 277 form a helical membrane-spanning segment; sequence VMFPKFYINIMAALSWGTALF. Residues 278-329 lie on the Lumenal side of the membrane; sequence RFPIFSEPAEYQFADFADLSVASSSYADYLPKSYGMYSFLDSIGIGTACWLP. The helical transmembrane segment at 330 to 350 threads the bilayer; the sequence is FLIVMVIYLFAALFVALLVIF. Over 351–372 the chain is Cytoplasmic; that stretch reads LKWLMSRIFNETIAETRWDTWS. Residues 373-393 form a helical membrane-spanning segment; the sequence is FIAGSLIRLYFLTYFPTVAYM. The Lumenal segment spans residues 394-404; it reads SFQFVAPPTGY. Residues 405-425 traverse the membrane as a helical segment; the sequence is EIIPVLWFIFFGIFIPVYLYM. The Cytoplasmic segment spans residues 426–457; sequence NLAFVEPSSKLLEDQTYLHLFGSIYNSFREER. A helical membrane pass occupies residues 458-480; it reads VMFWIFPIAVQFMRGITVGVIGS. Residues 481-483 lie on the Lumenal side of the membrane; sequence SGS. A helical transmembrane segment spans residues 484–503; it reads AQLAIFFILEVANVVAYAYV. Residues 504 to 514 are Cytoplasmic-facing; the sequence is RPHFPQTSMNT. A helical membrane pass occupies residues 515–535; it reads LNTFISTMRLITVILMIPLDP. Residues 536 to 545 are Lumenal-facing; the sequence is RLKVLGISRD. The helical transmembrane segment at 546-566 threads the bilayer; that stretch reads LLAYAILFIHIMVCILFLLLS. The Cytoplasmic segment spans residues 567 to 862; it reads TQRFMEVSAR…AESAWSIPHP (296 aa). The span at 668–686 shows a compositional bias: polar residues; that stretch reads QASSLVPSKNNTASSSSLM. 2 disordered regions span residues 668 to 717 and 815 to 862; these read QASS…SVRK and VLRS…IPHP. The segment covering 689-700 has biased composition (low complexity); the sequence is SPVTPSSPYSTS. The span at 834–850 shows a compositional bias: basic and acidic residues; the sequence is EPSRDEQYSMERKKTDD.

This sequence belongs to the transient receptor potential (TRP) ion channel family.

Its subcellular location is the cytoplasm. The protein resides in the golgi apparatus membrane. This is an uncharacterized protein from Schizosaccharomyces pombe (strain 972 / ATCC 24843) (Fission yeast).